Consider the following 402-residue polypeptide: NADH-quinone oxidoreductase subunit D (402 aa).

Belongs to the complex I 49 kDa subunit family. As to quaternary structure, NDH-1 is composed of 14 different subunits. Subunits NuoB, C, D, E, F, and G constitute the peripheral sector of the complex.

The protein resides in the cell inner membrane. It catalyses the reaction a quinone + NADH + 5 H(+)(in) = a quinol + NAD(+) + 4 H(+)(out). Its function is as follows. NDH-1 shuttles electrons from NADH, via FMN and iron-sulfur (Fe-S) centers, to quinones in the respiratory chain. The immediate electron acceptor for the enzyme in this species is believed to be ubiquinone. Couples the redox reaction to proton translocation (for every two electrons transferred, four hydrogen ions are translocated across the cytoplasmic membrane), and thus conserves the redox energy in a proton gradient. The chain is NADH-quinone oxidoreductase subunit D from Nitrobacter winogradskyi (strain ATCC 25391 / DSM 10237 / CIP 104748 / NCIMB 11846 / Nb-255).